The primary structure comprises 345 residues: Photosystem II protein D1 (345 aa).

The next 3 helical transmembrane spans lie at 30–47 (YVGW…TAAT), 119–134 (HFFI…EWEL), and 143–157 (WIAV…AASA). A chlorophyll a-binding site is contributed by His-119. Residue Tyr-127 coordinates pheophytin a. Residues Asp-171 and Glu-190 each contribute to the [CaMn4O5] cluster site. A helical membrane pass occupies residues 198–219 (FHMLGVAGVFGGSLFSAMHGSL). His-199 is a chlorophyll a binding site. A quinone-binding positions include His-216 and 265 to 266 (SF). Position 216 (His-216) interacts with Fe cation. His-273 contributes to the Fe cation binding site. A helical transmembrane segment spans residues 275-289 (FLAVWPVVGIWFTAL). [CaMn4O5] cluster-binding residues include His-333, Glu-334, Asp-343, and Ala-345.

The protein belongs to the reaction center PufL/M/PsbA/D family. In terms of assembly, PSII is composed of 1 copy each of membrane proteins PsbA, PsbB, PsbC, PsbD, PsbE, PsbF, PsbH, PsbI, PsbJ, PsbK, PsbL, PsbM, PsbT, PsbY, PsbZ, Psb30/Ycf12, at least 3 peripheral proteins of the oxygen-evolving complex and a large number of cofactors. It forms dimeric complexes. It depends on The D1/D2 heterodimer binds P680, chlorophylls that are the primary electron donor of PSII, and subsequent electron acceptors. It shares a non-heme iron and each subunit binds pheophytin, quinone, additional chlorophylls, carotenoids and lipids. D1 provides most of the ligands for the Mn4-Ca-O5 cluster of the oxygen-evolving complex (OEC). There is also a Cl(-1) ion associated with D1 and D2, which is required for oxygen evolution. The PSII complex binds additional chlorophylls, carotenoids and specific lipids. as a cofactor. Tyr-162 forms a radical intermediate that is referred to as redox-active TyrZ, YZ or Y-Z.

The protein resides in the plastid. It is found in the chloroplast thylakoid membrane. The enzyme catalyses 2 a plastoquinone + 4 hnu + 2 H2O = 2 a plastoquinol + O2. Functionally, photosystem II (PSII) is a light-driven water:plastoquinone oxidoreductase that uses light energy to abstract electrons from H(2)O, generating O(2) and a proton gradient subsequently used for ATP formation. It consists of a core antenna complex that captures photons, and an electron transfer chain that converts photonic excitation into a charge separation. The D1/D2 (PsbA/PsbD) reaction center heterodimer binds P680, the primary electron donor of PSII as well as several subsequent electron acceptors. The protein is Photosystem II protein D1 of Euglena gracilis.